The primary structure comprises 491 residues: Chromosomal replication initiator protein DnaA (491 aa).

Positions 1–69 are domain I, interacts with DnaA modulators; that stretch reads MTTWDKCLKK…TIQECHGNDL (69 aa). Positions 69–154 are domain II; it reads LIIEYSNKKF…KEDEEYSFGL (86 aa). The interval 155–371 is domain III, AAA+ region; sequence PLKEKYVFDS…GALNRVLTTS (217 aa). Residues Gly-199, Gly-201, Lys-202, and Thr-203 each coordinate ATP. The interval 372–491 is domain IV, binds dsDNA; the sequence is KFNHKDPTIE…YELLLDKISR (120 aa).

The protein belongs to the DnaA family. As to quaternary structure, oligomerizes as a right-handed, spiral filament on DNA at oriC.

Its subcellular location is the cytoplasm. Functionally, plays an essential role in the initiation and regulation of chromosomal replication. ATP-DnaA binds to the origin of replication (oriC) to initiate formation of the DNA replication initiation complex once per cell cycle. Binds the DnaA box (a 9 base pair repeat at the origin) and separates the double-stranded (ds)DNA. Forms a right-handed helical filament on oriC DNA; dsDNA binds to the exterior of the filament while single-stranded (ss)DNA is stabiized in the filament's interior. The ATP-DnaA-oriC complex binds and stabilizes one strand of the AT-rich DNA unwinding element (DUE), permitting loading of DNA polymerase. After initiation quickly degrades to an ADP-DnaA complex that is not apt for DNA replication. Binds acidic phospholipids. The protein is Chromosomal replication initiator protein DnaA of Francisella tularensis subsp. novicida (strain U112).